Here is an 831-residue protein sequence, read N- to C-terminus: Probable basic-leucine zipper transcription factor P (831 aa).

2 disordered regions span residues Met-1–Ile-33 and Asn-54–Arg-166. A compositionally biased stretch (low complexity) spans Asn-54–Lys-85. Residues Asn-87–Asn-96 are compositionally biased toward basic and acidic residues. Positions Lys-97–Gln-129 are enriched in low complexity. Residues Asn-101–Gly-141 are a coiled coil. The span at Tyr-130–Asp-143 shows a compositional bias: acidic residues. Basic and acidic residues predominate over residues Asp-144–Met-154. The bZIP domain occupies Gly-151–Val-214. Residues Lys-153–Lys-173 form a basic motif region. The leucine-zipper stretch occupies residues Ile-176–Ile-183. Composition is skewed to low complexity over residues Ser-469–Ser-484 and Ser-497–Ser-510. 4 disordered regions span residues Ser-469–Ser-510, Gln-658–Tyr-697, Asp-715–Lys-771, and Ser-787–Ser-810. Residues Ala-601 to Gln-664 adopt a coiled-coil conformation. 3 stretches are compositionally biased toward low complexity: residues Pro-674–Gln-695, Asn-720–Asn-750, and Ser-787–Ser-800.

Belongs to the bZIP family.

Its subcellular location is the nucleus. Functionally, probable transcriptional regulator. This is Probable basic-leucine zipper transcription factor P (bzpP) from Dictyostelium discoideum (Social amoeba).